A 33-amino-acid polypeptide reads, in one-letter code: Protein YtiC (33 aa).

Residues 10–29 traverse the membrane as a helical segment; it reads FDMLSIYIIYKLIVSNNTWL.

It is found in the cell inner membrane. This chain is Protein YtiC, found in Escherichia coli (strain K12).